Consider the following 67-residue polypeptide: ATP synthase F(0) complex subunit 8 (67 aa).

Residues 8 to 24 (PWFITILSMIITLFILF) traverse the membrane as a helical segment. The residue at position 54 (K54) is an N6-acetyllysine; alternate. N6-succinyllysine; alternate is present on K54. N6-acetyllysine is present on K57.

Belongs to the ATPase protein 8 family. In terms of assembly, component of the ATP synthase complex composed at least of ATP5F1A/subunit alpha, ATP5F1B/subunit beta, ATP5MC1/subunit c (homooctomer), MT-ATP6/subunit a, MT-ATP8/subunit 8, ATP5ME/subunit e, ATP5MF/subunit f, ATP5MG/subunit g, ATP5MK/subunit k, ATP5MJ/subunit j, ATP5F1C/subunit gamma, ATP5F1D/subunit delta, ATP5F1E/subunit epsilon, ATP5PF/subunit F6, ATP5PB/subunit b, ATP5PD/subunit d, ATP5PO/subunit OSCP. ATP synthase complex consists of a soluble F(1) head domain (subunits alpha(3) and beta(3)) - the catalytic core - and a membrane F(0) domain - the membrane proton channel (subunits c, a, 8, e, f, g, k and j). These two domains are linked by a central stalk (subunits gamma, delta, and epsilon) rotating inside the F1 region and a stationary peripheral stalk (subunits F6, b, d, and OSCP). Interacts with PRICKLE3.

The protein localises to the mitochondrion membrane. Functionally, subunit 8, of the mitochondrial membrane ATP synthase complex (F(1)F(0) ATP synthase or Complex V) that produces ATP from ADP in the presence of a proton gradient across the membrane which is generated by electron transport complexes of the respiratory chain. ATP synthase complex consist of a soluble F(1) head domain - the catalytic core - and a membrane F(1) domain - the membrane proton channel. These two domains are linked by a central stalk rotating inside the F(1) region and a stationary peripheral stalk. During catalysis, ATP synthesis in the catalytic domain of F(1) is coupled via a rotary mechanism of the central stalk subunits to proton translocation. In vivo, can only synthesize ATP although its ATP hydrolase activity can be activated artificially in vitro. Part of the complex F(0) domain. In Orycteropus afer (Aardvark), this protein is ATP synthase F(0) complex subunit 8.